The sequence spans 1494 residues: Neuropathy target esterase sws (1494 aa).

At 1 to 35 (MDVLELLRVSGSNMYYSTFLADAWCYYISNQITMT) the chain is on the lumenal side. A helical membrane pass occupies residues 36 to 56 (MYLYCALGVLSMLFIGWFVYF). At 57-1494 (KRLARLRLRH…NTNNETKNYL (1438 aa)) the chain is on the cytoplasmic side. 176-303 (IFGHFEKPIF…IRVIQVIMIR (128 aa)) serves as a coordination point for a nucleoside 3',5'-cyclic phosphate. Residues 362 to 372 (ASGTAGSTHTA) show a composition bias toward low complexity. 2 disordered regions span residues 362 to 405 (ASGT…ELSG) and 422 to 452 (NSYPPLYHQRESDGNLSTRRGSITQQEQPEV). Residues 435-449 (GNLSTRRGSITQQEQ) show a composition bias toward polar residues. Phosphoserine is present on Ser443. Residues 474 to 601 (ELGL…VVRR) and 590 to 717 (IVLD…LSHR) contribute to the a nucleoside 3',5'-cyclic phosphate site. The PNPLA domain occupies 944 to 1110 (LVLGGGGARG…VNNLPGHLWR (167 aa)). Positions 948–953 (GGGARG) match the GXGXXG motif. The GXSXG signature appears at 975 to 979 (GVSIG). Ser977 serves as the catalytic Nucleophile. Residue Asp1097 is the Proton acceptor of the active site. The DGA/G signature appears at 1097–1099 (DGG). Residues 1367-1494 (MDKATQSTPP…NTNNETKNYL (128 aa)) form a disordered region. Residues 1370–1381 (ATQSTPPLQSKA) are compositionally biased toward polar residues. 2 stretches are compositionally biased toward basic and acidic residues: residues 1389–1420 (SKEEARHEWEIKREQKQELAREQELERERELS) and 1452–1483 (MDKKKTKDNDRDEVRGSAEDKGKEKEEDKENR). Over residues 1484–1494 (SNTNNETKNYL) the composition is skewed to polar residues.

The protein belongs to the NTE family. As to quaternary structure, interacts with Pka-C3; interaction inhibits the catalytic function of Pka-C3 and the esterase activity of sws.

The protein resides in the endoplasmic reticulum membrane. The enzyme catalyses a 1-acyl-sn-glycero-3-phosphocholine + H2O = sn-glycerol 3-phosphocholine + a fatty acid + H(+). Functionally, phospholipase B that deacylates intracellular phosphatidylcholine (PtdCho), generating glycerophosphocholine (GroPtdCho). This deacylation occurs at both sn-2 and sn-1 positions of PtdCho. Its specific chemical modification by certain organophosphorus (OP) compounds leads to distal axonopathy. Plays a role in the signaling mechanism between neurons and glia that regulates glia wrapping during development of the adult brain. Essential for membrane lipid homeostasis and cell survival in both neurons and glia of the adult brain. This Drosophila pseudoobscura pseudoobscura (Fruit fly) protein is Neuropathy target esterase sws.